Here is a 427-residue protein sequence, read N- to C-terminus: Histidine--tRNA ligase (427 aa).

The protein belongs to the class-II aminoacyl-tRNA synthetase family. In terms of assembly, homodimer.

The protein localises to the cytoplasm. The catalysed reaction is tRNA(His) + L-histidine + ATP = L-histidyl-tRNA(His) + AMP + diphosphate + H(+). The protein is Histidine--tRNA ligase of Proteus mirabilis (strain HI4320).